The chain runs to 381 residues: Creatine kinase M-type (381 aa).

Residues 11-98 (KLNFKAEEEY…FDPIIQDRHG (88 aa)) enclose the Phosphagen kinase N-terminal domain. Positions 125–367 (YVLSSRVRTG…KLMVEMEKKL (243 aa)) constitute a Phosphagen kinase C-terminal domain. 128–132 (SSRVR) contributes to the ATP binding site. At S164 the chain carries Phosphoserine. T166 carries the post-translational modification Phosphothreonine. S178 bears the Phosphoserine mark. Phosphothreonine is present on T180. H191 serves as a coordination point for ATP. At S199 the chain carries Phosphoserine. Positions 236 and 292 each coordinate ATP. T313 and T322 each carry phosphothreonine. ATP is bound by residues 320–325 (RGTGGV) and D335. Residue S372 is modified to Phosphoserine.

Belongs to the ATP:guanido phosphotransferase family. Dimer of identical or non-identical chains, which can be either B (brain type) or M (muscle type). With MM being the major form in skeletal muscle and myocardium, MB existing in myocardium, and BB existing in many tissues, especially brain.

The protein localises to the cytoplasm. It carries out the reaction creatine + ATP = N-phosphocreatine + ADP + H(+). Its function is as follows. Reversibly catalyzes the transfer of phosphate between ATP and various phosphogens (e.g. creatine phosphate). Creatine kinase isoenzymes play a central role in energy transduction in tissues with large, fluctuating energy demands, such as skeletal muscle, heart, brain and spermatozoa. The chain is Creatine kinase M-type (CKM) from Bos taurus (Bovine).